The sequence spans 400 residues: GDNF family receptor alpha-3 (400 aa).

An N-terminal signal peptide occupies residues 1-31 (MVRPLNPRPLPPVVLMLLLLLPPSPLPLAAG). Cysteines 51 and 57 form a disulfide. N-linked (GlcNAc...) asparagine glycosylation is found at Asn95 and Asn148. Disulfide bonds link Cys162-Cys218, Cys169-Cys175, Cys186-Cys196, Cys191-Cys239, Cys220-Cys227, Cys248-Cys316, Cys255-Cys261, Cys272-Cys288, Cys281-Cys340, and Cys318-Cys328. Asn309 is a glycosylation site (N-linked (GlcNAc...) asparagine). Asn374 carries the GPI-anchor amidated asparagine lipid modification. Positions 375 to 400 (PAVRPQPWVPSLFSCTLPLILLLSLW) are cleaved as a propeptide — removed in mature form.

The protein belongs to the GDNFR family. Interacts with ARTN ligand and RET: forms a 2:2:2 ternary complex composed of ARTN ligand, GFRA3 and RET receptor. Interacts with SORL1. N-glycosylated. As to expression, widely expressed in adult and fetus which exhibit a similar pattern. Essentially not expressed in the central nervous system, but highly expressed in several sensory and sympathetic ganglia of the peripheral nervous system. Moderate expression in many non-neuronal tissues, particularly those of the digestive and urogenital systems, but high expression in stomach and appendix. Several types of glandular tissues show low expression. Very low or no expression detected in the hematopoietic system.

Its subcellular location is the cell membrane. Its function is as follows. Receptor for artemin (ARTN), a growth factor that supports the survival of sensory and sympathetic peripheral neurons. ARTN-binding leads to autophosphorylation and activation of the RET receptor. In Homo sapiens (Human), this protein is GDNF family receptor alpha-3 (GFRA3).